Here is a 260-residue protein sequence, read N- to C-terminus: Ribosomal RNA small subunit methyltransferase A (260 aa).

Positions 23, 48, 69, 94, and 110 each coordinate S-adenosyl-L-methionine.

Belongs to the class I-like SAM-binding methyltransferase superfamily. rRNA adenine N(6)-methyltransferase family. RsmA subfamily.

Its subcellular location is the cytoplasm. The enzyme catalyses adenosine(1518)/adenosine(1519) in 16S rRNA + 4 S-adenosyl-L-methionine = N(6)-dimethyladenosine(1518)/N(6)-dimethyladenosine(1519) in 16S rRNA + 4 S-adenosyl-L-homocysteine + 4 H(+). Functionally, specifically dimethylates two adjacent adenosines (A1518 and A1519) in the loop of a conserved hairpin near the 3'-end of 16S rRNA in the 30S particle. May play a critical role in biogenesis of 30S subunits. The protein is Ribosomal RNA small subunit methyltransferase A of Thermotoga petrophila (strain ATCC BAA-488 / DSM 13995 / JCM 10881 / RKU-1).